The primary structure comprises 341 residues: Putative UPF0607 protein ENSP00000383783 (341 aa).

Over residues 75-101 (EVRAEEPKEATEVKDQVETQGQEDNKR) the composition is skewed to basic and acidic residues. Disordered regions lie at residues 75–115 (EVRA…TSSL) and 216–278 (GLLM…PPPA). Residues 234 to 245 (SSRSSPSRAASH) show a composition bias toward low complexity.

The protein belongs to the UPF0607 family.

The chain is Putative UPF0607 protein ENSP00000383783 from Homo sapiens (Human).